We begin with the raw amino-acid sequence, 142 residues long: MAIERTFSIVKPDAVSKNLIGAIYNRFESAGLKVIAAKMLHMSSEQAAGFYAEHQGKPFYDGLVSFMTSGPVMVQVLEGEDAIRRHREIMGATNPKEALAGTLRACYAESIDRNAVHGSDAPASAAREIAYFFSDDEICPRG.

ATP contacts are provided by lysine 11, phenylalanine 59, arginine 87, threonine 93, arginine 104, and asparagine 114. Catalysis depends on histidine 117, which acts as the Pros-phosphohistidine intermediate.

It belongs to the NDK family. As to quaternary structure, homotetramer. Mg(2+) is required as a cofactor.

It localises to the cytoplasm. It carries out the reaction a 2'-deoxyribonucleoside 5'-diphosphate + ATP = a 2'-deoxyribonucleoside 5'-triphosphate + ADP. The enzyme catalyses a ribonucleoside 5'-diphosphate + ATP = a ribonucleoside 5'-triphosphate + ADP. Its function is as follows. Major role in the synthesis of nucleoside triphosphates other than ATP. The ATP gamma phosphate is transferred to the NDP beta phosphate via a ping-pong mechanism, using a phosphorylated active-site intermediate. The polypeptide is Nucleoside diphosphate kinase (Aeromonas salmonicida (strain A449)).